The sequence spans 251 residues: 3-deoxy-manno-octulosonate cytidylyltransferase (251 aa).

This sequence belongs to the KdsB family.

It localises to the cytoplasm. It carries out the reaction 3-deoxy-alpha-D-manno-oct-2-ulosonate + CTP = CMP-3-deoxy-beta-D-manno-octulosonate + diphosphate. It functions in the pathway nucleotide-sugar biosynthesis; CMP-3-deoxy-D-manno-octulosonate biosynthesis; CMP-3-deoxy-D-manno-octulosonate from 3-deoxy-D-manno-octulosonate and CTP: step 1/1. Its pathway is bacterial outer membrane biogenesis; lipopolysaccharide biosynthesis. Functionally, activates KDO (a required 8-carbon sugar) for incorporation into bacterial lipopolysaccharide in Gram-negative bacteria. In Rhizobium johnstonii (strain DSM 114642 / LMG 32736 / 3841) (Rhizobium leguminosarum bv. viciae), this protein is 3-deoxy-manno-octulosonate cytidylyltransferase.